The sequence spans 338 residues: Fructose-1,6-bisphosphatase class 1 1 (338 aa).

The Mg(2+) site is built by E91, D113, L115, and D116. Substrate-binding positions include 116-119 (DGSS), N208, and K274. Residue E280 participates in Mg(2+) binding.

The protein belongs to the FBPase class 1 family. Homotetramer. Mg(2+) is required as a cofactor.

It localises to the cytoplasm. The enzyme catalyses beta-D-fructose 1,6-bisphosphate + H2O = beta-D-fructose 6-phosphate + phosphate. Its pathway is carbohydrate biosynthesis; gluconeogenesis. The protein is Fructose-1,6-bisphosphatase class 1 1 of Cupriavidus necator (strain ATCC 17699 / DSM 428 / KCTC 22496 / NCIMB 10442 / H16 / Stanier 337) (Ralstonia eutropha).